The following is a 444-amino-acid chain: Phosphoglucosamine mutase (444 aa).

Serine 104 functions as the Phosphoserine intermediate in the catalytic mechanism. Mg(2+) is bound by residues serine 104, aspartate 243, aspartate 245, and aspartate 247. At serine 104 the chain carries Phosphoserine.

Belongs to the phosphohexose mutase family. The cofactor is Mg(2+). Activated by phosphorylation.

The enzyme catalyses alpha-D-glucosamine 1-phosphate = D-glucosamine 6-phosphate. Functionally, catalyzes the conversion of glucosamine-6-phosphate to glucosamine-1-phosphate. The protein is Phosphoglucosamine mutase of Neisseria meningitidis serogroup A / serotype 4A (strain DSM 15465 / Z2491).